Reading from the N-terminus, the 465-residue chain is Lactaldehyde dehydrogenase (465 aa).

Position 220–225 (220–225 (GSVEVG)) interacts with NAD(+). Catalysis depends on residues E240 and C274.

The protein belongs to the aldehyde dehydrogenase family. Homotetramer.

It catalyses the reaction (S)-lactaldehyde + NAD(+) + H2O = (S)-lactate + NADH + 2 H(+). It functions in the pathway cofactor biosynthesis; coenzyme F420 biosynthesis. Its function is as follows. Involved in F420 biosynthesis through the oxidation of lactaldehyde to lactate. The polypeptide is Lactaldehyde dehydrogenase (Methanococcus maripaludis (strain C5 / ATCC BAA-1333)).